The chain runs to 316 residues: Acetaldehyde dehydrogenase 3 (316 aa).

12–15 (SGNI) contacts NAD(+). Cysteine 132 serves as the catalytic Acyl-thioester intermediate. Residues 163–171 (SAGPGTRAN) and asparagine 289 contribute to the NAD(+) site.

The protein belongs to the acetaldehyde dehydrogenase family.

The catalysed reaction is acetaldehyde + NAD(+) + CoA = acetyl-CoA + NADH + H(+). In Comamonas testosteroni (Pseudomonas testosteroni), this protein is Acetaldehyde dehydrogenase 3 (mhpF).